The primary structure comprises 108 residues: Integration host factor subunit alpha (108 aa).

This sequence belongs to the bacterial histone-like protein family. As to quaternary structure, heterodimer of an alpha and a beta chain.

This protein is one of the two subunits of integration host factor, a specific DNA-binding protein that functions in genetic recombination as well as in transcriptional and translational control. The chain is Integration host factor subunit alpha from Bartonella henselae (strain ATCC 49882 / DSM 28221 / CCUG 30454 / Houston 1) (Rochalimaea henselae).